A 394-amino-acid chain; its full sequence is Alanine racemase 2 (394 aa).

The active-site Proton acceptor; specific for D-alanine is the Lys39. At Lys39 the chain carries N6-(pyridoxal phosphate)lysine. A substrate-binding site is contributed by Arg139. Tyr272 serves as the catalytic Proton acceptor; specific for L-alanine. Residue Met320 participates in substrate binding.

Belongs to the alanine racemase family. The cofactor is pyridoxal 5'-phosphate.

It carries out the reaction L-alanine = D-alanine. Its pathway is amino-acid biosynthesis; D-alanine biosynthesis; D-alanine from L-alanine: step 1/1. Functionally, catalyzes the interconversion of L-alanine and D-alanine. May also act on other amino acids. In Bacillus subtilis (strain 168), this protein is Alanine racemase 2 (alr2).